Consider the following 906-residue polypeptide: DNA mismatch repair protein MutS (906 aa).

Residue Gly-656 to Ser-663 participates in ATP binding.

Belongs to the DNA mismatch repair MutS family.

Functionally, this protein is involved in the repair of mismatches in DNA. It is possible that it carries out the mismatch recognition step. This protein has a weak ATPase activity. The polypeptide is DNA mismatch repair protein MutS (Rhodopseudomonas palustris (strain BisA53)).